We begin with the raw amino-acid sequence, 197 residues long: MEIKQAEFIISAVHPSQYPKDKRIEIAFVGRSNVGKSSLINALTNRKKLVKVSGTPGKTRLINFFLINNEFYFVDLPGYGYAKISKTEKKSWGKVVEDYLRGREELKRVILLLDCRHKPTNDDITMYKWLKYYNYNTIIVATKVDKVSKSQLFKNLKIIKDTLKPETGDEILTFSSLNKQGKEEFLKVLESVIDFYS.

Positions 22–195 (KRIEIAFVGR…LKVLESVIDF (174 aa)) constitute an EngB-type G domain. Residues 30-37 (GRSNVGKS), 57-61 (GKTRL), 75-78 (DLPG), 142-145 (TKVD), and 174-176 (FSS) each bind GTP. 2 residues coordinate Mg(2+): Ser37 and Thr59.

It belongs to the TRAFAC class TrmE-Era-EngA-EngB-Septin-like GTPase superfamily. EngB GTPase family. It depends on Mg(2+) as a cofactor.

Necessary for normal cell division and for the maintenance of normal septation. The chain is Probable GTP-binding protein EngB from Clostridium kluyveri (strain ATCC 8527 / DSM 555 / NBRC 12016 / NCIMB 10680 / K1).